A 411-amino-acid polypeptide reads, in one-letter code: Class E basic helix-loop-helix protein 40 (411 aa).

The segment at 1-21 (MERIPSAQPPPTCLPKTPGLE) is disordered. The segment at 1–139 (MERIPSAQPP…LSGKNIEAGQ (139 aa)) is essential for interaction with BMAL1, E-box binding and repressor activity against the CLOCK-BMAL1 heterodimer. Positions 52 to 107 (TYKLPHRLIEKKRRDRINECIAQLKDLLPEHLKLTTLGHLEKAVVLELTLKHVKAL) constitute a bHLH domain. The tract at residues 75–79 (LKDLL) is necessary for interaction with RXRA and repressor activity against RXRA. The 34-residue stretch at 142-175 (FCSGFQTCAREVLQYLAKHENTRDLKSSQLVTHL) folds into the Orange domain. Lys159 is covalently cross-linked (Glycyl lysine isopeptide (Lys-Gly) (interchain with G-Cter in SUMO1, SUMO2 and SUMO3)). A Glycyl lysine isopeptide (Lys-Gly) (interchain with G-Cter in SUMO2) cross-link involves residue Lys167. A disordered region spans residues 186–293 (SASRKPLDSA…EPPTKKSRMQ (108 aa)). Ser235 carries the post-translational modification Phosphoserine. The span at 248 to 271 (ELEKGDLRSEQPYFKSDHGRRFTV) shows a compositional bias: basic and acidic residues. Lys279 participates in a covalent cross-link: Glycyl lysine isopeptide (Lys-Gly) (interchain with G-Cter in SUMO1); alternate. A Glycyl lysine isopeptide (Lys-Gly) (interchain with G-Cter in SUMO1, SUMO2 and SUMO3); alternate cross-link involves residue Lys279. A Glycyl lysine isopeptide (Lys-Gly) (interchain with G-Cter in SUMO2); alternate cross-link involves residue Lys279. Lys288 is covalently cross-linked (Glycyl lysine isopeptide (Lys-Gly) (interchain with G-Cter in SUMO2)). Phosphoserine is present on Ser383.

In terms of assembly, homodimer. Heterodimer with BHLHE41/DEC2. Interacts with TCF3/E47. Interacts with ubiquitin-conjugating enzyme UBE2I/UBC9. Interacts with HDAC1, SUMO1, RXRA and BMAL1. Post-translationally, ubiquitinated; which may lead to proteasomal degradation. Sumoylation inhibits its ubiquitination and promotes its negative regulation of the CLOCK-BMAL1 heterodimer transcriptional activator activity. As to expression, expressed in heart, spleen, lung, liver, muscle, kidney, uterus and gut. Highly expressed in the cerebral cortex, especially in the fifth layer, thalamus, superior colliculus, olfactory bulb, piriform cortex, hippocampus and hypothalamic nuclei.

The protein resides in the cytoplasm. It localises to the nucleus. Transcriptional repressor involved in the regulation of the circadian rhythm by negatively regulating the activity of the clock genes and clock-controlled genes. Acts as the negative limb of a novel autoregulatory feedback loop (DEC loop) which differs from the one formed by the PER and CRY transcriptional repressors (PER/CRY loop). Both these loops are interlocked as it represses the expression of PER1/2 and in turn is repressed by PER1/2 and CRY1/2. Represses the activity of the circadian transcriptional activator: CLOCK-BMAL1|BMAL2 heterodimer by competing for the binding to E-box elements (5'-CACGTG-3') found within the promoters of its target genes. Negatively regulates its own expression and the expression of DBP and BHLHE41/DEC2. Acts as a corepressor of RXR and the RXR-LXR heterodimers and represses the ligand-induced RXRA and NR1H3/LXRA transactivation activity. May be involved in the regulation of chondrocyte differentiation via the cAMP pathway. Represses the transcription of NR0B2 and attentuates the transactivation of NR0B2 by the CLOCK-BMAL1 complex. Drives the circadian rhythm of blood pressure through transcriptional repression of ATP1B1 in the cardiovascular system. The chain is Class E basic helix-loop-helix protein 40 (Bhlhe40) from Rattus norvegicus (Rat).